The chain runs to 343 residues: Ferredoxin--NADP reductase (343 aa).

Residues Asp-31, Lys-39, Tyr-43, Val-83, Ile-118, Asp-285, and Ser-326 each coordinate FAD.

It belongs to the ferredoxin--NADP reductase type 2 family. As to quaternary structure, homodimer. FAD serves as cofactor.

It catalyses the reaction 2 reduced [2Fe-2S]-[ferredoxin] + NADP(+) + H(+) = 2 oxidized [2Fe-2S]-[ferredoxin] + NADPH. The polypeptide is Ferredoxin--NADP reductase (Staphylococcus saprophyticus subsp. saprophyticus (strain ATCC 15305 / DSM 20229 / NCIMB 8711 / NCTC 7292 / S-41)).